Here is a 157-residue protein sequence, read N- to C-terminus: UPF0587 protein C2D10.03c (157 aa).

Residues Cys-34, Cys-37, Cys-68, and Cys-71 each contribute to the Zn(2+) site.

It belongs to the UPF0587 family.

This Schizosaccharomyces pombe (strain 972 / ATCC 24843) (Fission yeast) protein is UPF0587 protein C2D10.03c.